The primary structure comprises 95 residues: UPF0358 protein BCG9842_B1188 (95 aa).

It belongs to the UPF0358 family.

The polypeptide is UPF0358 protein BCG9842_B1188 (Bacillus cereus (strain G9842)).